The following is a 77-amino-acid chain: Putative defensin-like protein 129 (77 aa).

Residues 1 to 25 (MTKNTALTIFMVVLVIEMVMEETQG) form the signal peptide. Cystine bridges form between cysteine 28-cysteine 77, cysteine 37-cysteine 59, cysteine 42-cysteine 71, and cysteine 46-cysteine 73.

This sequence belongs to the DEFL family.

Its subcellular location is the secreted. The polypeptide is Putative defensin-like protein 129 (LCR13) (Arabidopsis thaliana (Mouse-ear cress)).